Reading from the N-terminus, the 348-residue chain is MO25-like protein At2g03410 (348 aa).

Belongs to the Mo25 family.

The chain is MO25-like protein At2g03410 from Arabidopsis thaliana (Mouse-ear cress).